We begin with the raw amino-acid sequence, 75 residues long: MFTLKKPLLFLFFLGTISLSFCEEERGADEDDGGEMTEEEKRGVLDTLKNVAIGVAKGAGTGVLKALLCQLDKSC.

The signal sequence occupies residues 1–22; that stretch reads MFTLKKPLLFLFFLGTISLSFC. A propeptide spans 23–40 (removed in mature form); the sequence is EEERGADEDDGGEMTEEE. Cys69 and Cys75 form a disulfide bridge.

It belongs to the frog skin active peptide (FSAP) family. Brevinin subfamily. Expressed by the skin glands.

Its subcellular location is the secreted. Antimicrobial peptide. Active against some Gram-negative and a variety of Gram-positive bacterial strains. Active against fungus C.glabrata 090902 but not against C.albicans ATCC 10231. Shows hemolytic activity against human erythrocytes. The sequence is that of Brevinin-2SN2 from Sylvirana spinulosa (Fine-spined frog).